Reading from the N-terminus, the 99-residue chain is A-type ATP synthase subunit F (99 aa).

The protein belongs to the V-ATPase F subunit family. As to quaternary structure, has multiple subunits with at least A(3), B(3), C, D, E, F, H, I and proteolipid K(x).

Its subcellular location is the cell membrane. Component of the A-type ATP synthase that produces ATP from ADP in the presence of a proton gradient across the membrane. This Methanococcus maripaludis (strain C6 / ATCC BAA-1332) protein is A-type ATP synthase subunit F.